Reading from the N-terminus, the 1107-residue chain is MVRECVEESFGPKKMTKKSIVDSCKKNKLYITPHLNDILYLNYSGYNAIESLEEYVGLKCLWLECNAISEIKGLEYQTELKCLYLQNNLITKIENLDSCKQLDTLNLSHNHITRIENCGHDILPVLNTLNLSHNYLKTADNLDHLRHCNFVSVLDLSHNRIEDIAIVKILGGMKELRVLTMTGNPVVNEIPSYRKTLILECKNLTYLDTRPVFDRDRACAEAWKRGGYEEERKELLRWKKEEQRKIRRSINATLRMRHRGDGEPELLKTSSDEEDEDKASKCGKDMSSMLEINQKTNEQAWAEVEKMFCTTPSATGSSGIFQRFATNRGGGADGDGEVIETSEEDIEATIEDIKAVSPKKLIEEISSDSDGAKENYDCKPDEVIAKPCSEKLIEEIVIETAECDSGPSSPEYHEALDKPIENIVNLTNESPLTSPSFDTEPRTLIEEIEPTDVEEEQQIEEQPAPKPLSKNMEKVMSTEKEDDTLNVLIENNEEISITMESKDGELISKVESRPPSTECKKYKIVSTNDVDNSESEPTDITNEDQEYRSSSVSVTSSTDSSDSEDLFDKIVPNKHPKLATNYRQDSTTSTDSENEVSPSKPPIKLEKEKSIAECIDEYKKFFKAAKILESDPEDESSTKMARPHTAKAKRTEPIIYEGVLRNMERNSNESKIAEARTEAKESKEKVIDRLIEQQNLVDMNLEEQNISIGGQEHDFNEYRLEAFRKDQEKLQCLIDRVTAQKDLYNAHIDQIHNQLANIMEDYDQIGLKLKKVDDFLENIKEEPKAPETPSIESEEEIPEELEVHSSEHEQEIVENDNLAQQIIEKIISQSVKTSSEDLKSNFDDSSESSDSAEEDFMDSIRPDHNLLEILTSPKPIPILDPELIPNVDNEFQRDPVYRKFIEIQEEIDKLTEDELYDIVTEATGEFSEEAHVEHCLNTQVDQYWKQYDDIEEFRKNINLDSHPIIQKFRQFIRCHCENKYPGEVDSTIDNLDKACRKLERRLSNQLFDEYLELSRKMSVATIGGESSANEIELIEVDEEENDVEDVVKKITAWVEEQVQNEIAELNEERAAHAGEVMQDTEDVESKPVEIDGTKEETVDSELADNCD.

6 LRR repeats span residues 34 to 56, 57 to 78, 79 to 100, 101 to 122, 125 to 146, and 150 to 171; these read HLND…EEYV, GLKC…EYQT, ELKC…DSCK, QLDT…GHDI, VLNT…DHLR, and FVSV…KILG. Residues 184-223 enclose the LRRCT domain; sequence NPVVNEIPSYRKTLILECKNLTYLDTRPVFDRDRACAEAW. Disordered regions lie at residues 258 to 281, 428 to 487, 500 to 608, 780 to 810, 834 to 855, and 1070 to 1107; these read HRGD…KASK, NESP…TLNV, ESKD…LEKE, KEEP…EHEQ, SSED…AEED, and AAHA…DNCD. A compositionally biased stretch (polar residues) spans 428–437; that stretch reads NESPLTSPSF. The segment covering 446-459 has biased composition (acidic residues); it reads EEIEPTDVEEEQQI. The segment covering 500–512 has biased composition (basic and acidic residues); it reads ESKDGELISKVES. Residues 531–544 show a composition bias toward acidic residues; the sequence is DNSESEPTDITNED. A compositionally biased stretch (low complexity) spans 549 to 560; that stretch reads SSSVSVTSSTDS. Positions 581–597 are enriched in polar residues; sequence NYRQDSTTSTDSENEVS. Over residues 801–810 the composition is skewed to basic and acidic residues; sequence LEVHSSEHEQ. Acidic residues predominate over residues 844–855; that stretch reads DSSESSDSAEED. Residues 1083–1097 are compositionally biased toward basic and acidic residues; that stretch reads VESKPVEIDGTKEET. The segment covering 1098–1107 has biased composition (acidic residues); the sequence is VDSELADNCD.

It belongs to the DNAAF1 family.

Its subcellular location is the cell projection. It is found in the cilium. Its function is as follows. Cilium-specific protein required for cilia structures. This is Dynein axonemal assembly factor 1 homolog from Aedes aegypti (Yellowfever mosquito).